Reading from the N-terminus, the 468-residue chain is Secretogranin-3 (468 aa).

A signal peptide spans 1–19 (MGFLGTGTWILVLVLPIQA). The disordered stretch occupies residues 23-69 (PGGSQDKSLHNRELSAERPLNEQIAEAEEDKIKKTYPPENKPGQSNY). Basic and acidic residues predominate over residues 29–42 (KSLHNRELSAERPL). Position 37 is a phosphoserine (Ser-37). O-linked (Xyl...) (chondroitin sulfate) serine glycosylation is present at Ser-37. Residues Thr-216 and Thr-231 are each glycosylated (O-linked (GalNAc...) threonine). Residues 353–406 (KLFPAPSEKSHEETDSTKEEAAKMEKEYGSLKDSTKDDNSNPGGKTDEPKGKTE) form a disordered region. The O-linked (GalNAc...) serine glycan is linked to Ser-359. A compositionally biased stretch (basic and acidic residues) spans 360–406 (EKSHEETDSTKEEAAKMEKEYGSLKDSTKDDNSNPGGKTDEPKGKTE). Position 362 is a phosphoserine (Ser-362).

As to quaternary structure, interacts with CHGA. Interacts with secretogranin II/SCG2. Interacts (via C-terminus) with CPE. O-glycosylated. As to expression, detected in urine (at protein level). Expressed in brain, heart, kidney, liver and skeletal muscle.

It is found in the cytoplasmic vesicle. Its subcellular location is the secretory vesicle. The protein localises to the secretory vesicle membrane. The protein resides in the secreted. Functionally, member of the granin protein family that regulates the biogenesis of secretory granules. Acts as a sorting receptor for intragranular proteins including chromogranin A/CHGA. May also play a role in angiogenesis. Promotes endothelial proliferation, migration and tube formation through MEK/ERK signaling pathway. This Homo sapiens (Human) protein is Secretogranin-3 (SCG3).